A 264-amino-acid polypeptide reads, in one-letter code: S-adenosylmethionine decarboxylase proenzyme (264 aa).

Serine 112 functions as the Schiff-base intermediate with substrate; via pyruvic acid in the catalytic mechanism. Pyruvic acid (Ser); by autocatalysis is present on serine 112. The active-site Proton acceptor; for processing activity is histidine 117. Cysteine 140 (proton donor; for catalytic activity) is an active-site residue.

This sequence belongs to the prokaryotic AdoMetDC family. Type 2 subfamily. Heterooctamer of four alpha and four beta chains arranged as a tetramer of alpha/beta heterodimers. It depends on pyruvate as a cofactor. Post-translationally, is synthesized initially as an inactive proenzyme. Formation of the active enzyme involves a self-maturation process in which the active site pyruvoyl group is generated from an internal serine residue via an autocatalytic post-translational modification. Two non-identical subunits are generated from the proenzyme in this reaction, and the pyruvate is formed at the N-terminus of the alpha chain, which is derived from the carboxyl end of the proenzyme. The post-translation cleavage follows an unusual pathway, termed non-hydrolytic serinolysis, in which the side chain hydroxyl group of the serine supplies its oxygen atom to form the C-terminus of the beta chain, while the remainder of the serine residue undergoes an oxidative deamination to produce ammonia and the pyruvoyl group blocking the N-terminus of the alpha chain.

It carries out the reaction S-adenosyl-L-methionine + H(+) = S-adenosyl 3-(methylsulfanyl)propylamine + CO2. It functions in the pathway amine and polyamine biosynthesis; S-adenosylmethioninamine biosynthesis; S-adenosylmethioninamine from S-adenosyl-L-methionine: step 1/1. Functionally, catalyzes the decarboxylation of S-adenosylmethionine to S-adenosylmethioninamine (dcAdoMet), the propylamine donor required for the synthesis of the polyamines spermine and spermidine from the diamine putrescine. The chain is S-adenosylmethionine decarboxylase proenzyme from Yersinia enterocolitica serotype O:8 / biotype 1B (strain NCTC 13174 / 8081).